Here is a 503-residue protein sequence, read N- to C-terminus: MSDLKETRLEKAQVLKKLGNGPYGIRFEVTHKAAVLQVEHQDLANGQERQLEVCVAGRVISRRVMGKLAFFTLSDESGSIQLFLEKATLEEHSDLDQESPGSFSQLTDLVDSGDWIGVNGILRRTDRGELSIKVFSWTMLCKSLQPLPDKWHGLSDVEKRYRQRYVDLIVNPQSRKTFRSRALMVSAIRRWLDERDFLEIETPVLQSEAGGAEARPFITHHNTLDLSLYLRIATELHLKRLVVGGFERVYELGRIFRNEGISTRHNPEFTTVEIYQAFADYTDMMDLTEEMISFVCSQICGSTTIQYQGKEVDLTPPWRRITMHELVLESTGLDFYEFGQDISKASTAMQSVGLNVPDHADSVGRLMNEAFEQAVEGDLFQPTFVMDYPIEISPLARKHRSKPGIVERFELFIAGRETANAFSELIDPVDQKERLLLQQSRRQAGDLEAHVIDEDFVNALEVGMPPTGGLGIGIDRLVMLLTDSPSIRDVIAFPLLKPESGSQ.

Positions 410 and 417 each coordinate Mg(2+).

It belongs to the class-II aminoacyl-tRNA synthetase family. In terms of assembly, homodimer. Requires Mg(2+) as cofactor.

Its subcellular location is the cytoplasm. It carries out the reaction tRNA(Lys) + L-lysine + ATP = L-lysyl-tRNA(Lys) + AMP + diphosphate. This Prochlorococcus marinus (strain MIT 9211) protein is Lysine--tRNA ligase.